Consider the following 410-residue polypeptide: NADH-quinone oxidoreductase subunit H (410 aa).

The next 9 membrane-spanning stretches (helical) occupy residues L11–I31, F79–I99, L119–L139, V160–T180, G192–G212, A257–A277, W283–L303, A317–I337, and Y347–L367. A disordered region spans residues A376–G410.

This sequence belongs to the complex I subunit 1 family. NDH-1 is composed of 14 different subunits. Subunits NuoA, H, J, K, L, M, N constitute the membrane sector of the complex.

The protein resides in the cell membrane. It catalyses the reaction a quinone + NADH + 5 H(+)(in) = a quinol + NAD(+) + 4 H(+)(out). Functionally, NDH-1 shuttles electrons from NADH, via FMN and iron-sulfur (Fe-S) centers, to quinones in the respiratory chain. The immediate electron acceptor for the enzyme in this species is believed to be menaquinone. Couples the redox reaction to proton translocation (for every two electrons transferred, four hydrogen ions are translocated across the cytoplasmic membrane), and thus conserves the redox energy in a proton gradient. In Mycobacterium bovis (strain ATCC BAA-935 / AF2122/97), this protein is NADH-quinone oxidoreductase subunit H.